The following is a 251-amino-acid chain: Flap endonuclease Xni (251 aa).

Asp104 provides a ligand contact to Mg(2+). Residues 160–250 form the 5'-3' exonuclease domain; it reads VQPQQLPDYW…DGNLQQLRLK (91 aa). Residues Leu171, Ala172, Pro180, Val182, and Ile185 each coordinate K(+). The tract at residues 184–189 is interaction with DNA; sequence GIGPKS.

Belongs to the Xni family. It depends on Mg(2+) as a cofactor. K(+) is required as a cofactor.

Functionally, has flap endonuclease activity. During DNA replication, flap endonucleases cleave the 5'-overhanging flap structure that is generated by displacement synthesis when DNA polymerase encounters the 5'-end of a downstream Okazaki fragment. The chain is Flap endonuclease Xni from Escherichia fergusonii (strain ATCC 35469 / DSM 13698 / CCUG 18766 / IAM 14443 / JCM 21226 / LMG 7866 / NBRC 102419 / NCTC 12128 / CDC 0568-73).